Here is a 106-residue protein sequence, read N- to C-terminus: Thioredoxin (106 aa).

The 105-residue stretch at 2–106 folds into the Thioredoxin domain; that stretch reads SHYIELTEEN…LKEQLNKLLG (105 aa). Cysteines 30 and 33 form a disulfide.

The protein belongs to the thioredoxin family.

Its function is as follows. Participates in various redox reactions through the reversible oxidation of its active center dithiol to a disulfide and catalyzes dithiol-disulfide exchange reactions. In Helicobacter pylori (strain J99 / ATCC 700824) (Campylobacter pylori J99), this protein is Thioredoxin (trxA).